A 474-amino-acid chain; its full sequence is 6-phospho-beta-galactosidase (474 aa).

Glutamine 19, histidine 116, asparagine 159, glutamate 160, and asparagine 297 together coordinate D-galactose 6-phosphate. The active-site Proton donor is glutamate 160. Residue glutamate 375 is the Nucleophile of the active site. D-galactose 6-phosphate is bound by residues serine 433, tryptophan 434, lysine 440, and tyrosine 442.

It belongs to the glycosyl hydrolase 1 family.

It catalyses the reaction a 6-phospho-beta-D-galactoside + H2O = D-galactose 6-phosphate + an alcohol. The protein operates within carbohydrate metabolism; lactose degradation; D-galactose 6-phosphate and beta-D-glucose from lactose 6-phosphate: step 1/1. This is 6-phospho-beta-galactosidase from Lacticaseibacillus casei (Lactobacillus casei).